Here is a 365-residue protein sequence, read N- to C-terminus: Peptide chain release factor 2 (365 aa).

Gln252 is subject to N5-methylglutamine.

The protein belongs to the prokaryotic/mitochondrial release factor family. Methylated by PrmC. Methylation increases the termination efficiency of RF2.

The protein localises to the cytoplasm. Its function is as follows. Peptide chain release factor 2 directs the termination of translation in response to the peptide chain termination codons UGA and UAA. The protein is Peptide chain release factor 2 of Aeromonas hydrophila subsp. hydrophila (strain ATCC 7966 / DSM 30187 / BCRC 13018 / CCUG 14551 / JCM 1027 / KCTC 2358 / NCIMB 9240 / NCTC 8049).